The primary structure comprises 308 residues: 4-hydroxy-3-methylbut-2-enyl diphosphate reductase (308 aa).

Residue cysteine 12 participates in [4Fe-4S] cluster binding. Positions 43 and 77 each coordinate (2E)-4-hydroxy-3-methylbut-2-enyl diphosphate. Histidine 43 and histidine 77 together coordinate dimethylallyl diphosphate. Histidine 43 and histidine 77 together coordinate isopentenyl diphosphate. Residue cysteine 99 participates in [4Fe-4S] cluster binding. A (2E)-4-hydroxy-3-methylbut-2-enyl diphosphate-binding site is contributed by histidine 127. Residue histidine 127 participates in dimethylallyl diphosphate binding. Residue histidine 127 participates in isopentenyl diphosphate binding. The active-site Proton donor is glutamate 129. Threonine 167 contacts (2E)-4-hydroxy-3-methylbut-2-enyl diphosphate. Cysteine 197 serves as a coordination point for [4Fe-4S] cluster. (2E)-4-hydroxy-3-methylbut-2-enyl diphosphate-binding residues include serine 225, serine 226, asparagine 227, and serine 269. Positions 225, 226, 227, and 269 each coordinate dimethylallyl diphosphate. Isopentenyl diphosphate contacts are provided by serine 225, serine 226, asparagine 227, and serine 269.

It belongs to the IspH family. The cofactor is [4Fe-4S] cluster.

The catalysed reaction is isopentenyl diphosphate + 2 oxidized [2Fe-2S]-[ferredoxin] + H2O = (2E)-4-hydroxy-3-methylbut-2-enyl diphosphate + 2 reduced [2Fe-2S]-[ferredoxin] + 2 H(+). It carries out the reaction dimethylallyl diphosphate + 2 oxidized [2Fe-2S]-[ferredoxin] + H2O = (2E)-4-hydroxy-3-methylbut-2-enyl diphosphate + 2 reduced [2Fe-2S]-[ferredoxin] + 2 H(+). Its pathway is isoprenoid biosynthesis; dimethylallyl diphosphate biosynthesis; dimethylallyl diphosphate from (2E)-4-hydroxy-3-methylbutenyl diphosphate: step 1/1. The protein operates within isoprenoid biosynthesis; isopentenyl diphosphate biosynthesis via DXP pathway; isopentenyl diphosphate from 1-deoxy-D-xylulose 5-phosphate: step 6/6. Its function is as follows. Catalyzes the conversion of 1-hydroxy-2-methyl-2-(E)-butenyl 4-diphosphate (HMBPP) into a mixture of isopentenyl diphosphate (IPP) and dimethylallyl diphosphate (DMAPP). Acts in the terminal step of the DOXP/MEP pathway for isoprenoid precursor biosynthesis. The chain is 4-hydroxy-3-methylbut-2-enyl diphosphate reductase from Wolbachia pipientis subsp. Culex pipiens (strain wPip).